Here is a 261-residue protein sequence, read N- to C-terminus: Carnitinyl-CoA dehydratase (261 aa).

Glutamate 111 serves as the catalytic Nucleophile. The Proton acceptor role is filled by glutamate 131.

This sequence belongs to the enoyl-CoA hydratase/isomerase family.

The enzyme catalyses (R)-carnitinyl-CoA = crotonobetainyl-CoA + H2O. It functions in the pathway amine and polyamine metabolism; carnitine metabolism. Catalyzes the reversible dehydration of L-carnitinyl-CoA to crotonobetainyl-CoA. The sequence is that of Carnitinyl-CoA dehydratase from Salmonella paratyphi C (strain RKS4594).